We begin with the raw amino-acid sequence, 281 residues long: Glutamate racemase (281 aa).

Substrate-binding positions include 10-11 and 42-43; these read DS and YG. The active-site Proton donor/acceptor is Cys74. 75–76 contributes to the substrate binding site; sequence NT. Cys190 acts as the Proton donor/acceptor in catalysis. 191–192 lines the substrate pocket; the sequence is TH.

The protein belongs to the aspartate/glutamate racemases family.

The enzyme catalyses L-glutamate = D-glutamate. Its pathway is cell wall biogenesis; peptidoglycan biosynthesis. Functionally, provides the (R)-glutamate required for cell wall biosynthesis. The protein is Glutamate racemase of Oenococcus oeni (strain ATCC BAA-331 / PSU-1).